The primary structure comprises 757 residues: RNA-directed RNA polymerase catalytic subunit (757 aa).

The disordered stretch occupies residues 56 to 78 (TTNTETGAHQLNPIDGPLPEDNE). 2 short sequence motifs (nuclear localization signal) span residues 187–195 (RKRRVRDNM) and 203–216 (RTIG…NKRS). The tract at residues 249–256 (RGFVYFVE) is promoter-binding site. A RdRp catalytic domain is found at 286 to 483 (VRKMMTNSQD…GINMSKKKSY (198 aa)).

It belongs to the influenza viruses polymerase PB1 family. Influenza RNA polymerase is composed of three subunits: PB1, PB2 and PA. Interacts (via N-terminus) with PA (via C-terminus). Interacts (via C-terminus) with PB2 (via N-terminus); this interaction is essential for transcription initiation. Post-translationally, phosphorylated by host PRKCA.

Its subcellular location is the host nucleus. It is found in the host cytoplasm. It catalyses the reaction RNA(n) + a ribonucleoside 5'-triphosphate = RNA(n+1) + diphosphate. Functionally, RNA-dependent RNA polymerase which is responsible for replication and transcription of virus RNA segments. The transcription of viral mRNAs occurs by a unique mechanism called cap-snatching. 5' methylated caps of cellular mRNAs are cleaved after 10-13 nucleotides by PA. In turn, these short capped RNAs are used as primers by PB1 for transcription of viral mRNAs. During virus replication, PB1 initiates RNA synthesis and copy vRNA into complementary RNA (cRNA) which in turn serves as a template for the production of more vRNAs. The chain is RNA-directed RNA polymerase catalytic subunit from Aves (Human).